The primary structure comprises 85 residues: Small ribosomal subunit protein bS16 (85 aa).

Belongs to the bacterial ribosomal protein bS16 family.

The polypeptide is Small ribosomal subunit protein bS16 (Pelobacter propionicus (strain DSM 2379 / NBRC 103807 / OttBd1)).